Reading from the N-terminus, the 2936-residue chain is MASDKPGPGLEPQPVALLAVGAGGGAGGGGAMGEPRGAAGSGPVVLPAGMINPSVPIRNIRMKFAVLIGLIQVGEVSNRDIVETVLNLLVGGEFDLEMNFIIQDAESITCMTELLEHCDVTCQAEIWSMFTAILRKSVRNLQTSTEVGLIEQVLLKMSAVDDMIADLLVDMLGVLASYSITVKELKLLFSMLRGESGIWPRHAVKLLSVLNQMPQRHGPDTFFNFPGCSAAAIALPPIAKWPYQNGFTLNTWFRMDPLNNINVDKDKPYLYCFRTSKGVGYSAHFVGNCLIVTSLKSKGKGFQHCVKYDFQPRKWYMISIVHIYNRWRNSEIRCYVNGQLVSYGDMAWHVNTNDSYDKCFLGSSETADANRVFCGQLGAVYVFSEALNPAQIFAVHQLGPGYKSTFKFKSESDIHLAEHHKQVLYDGKLASSIAFSYNAKATDAQLCLESSPKENASIFVHSPHALMLQDVKAIVTHSIHSAIHSIGGIQVLFPLFAQLDNRQLNDSQVETTVCATLLAFLVELLKSSVAMQEQMLGGKGFLVIGYLLEKSSRVHITRAVLEQFLSFAKYLDGLSHGAPLLKQLCDHILFNPAIWIHTPAKVQLSLYTYLSAEFIGTATIYTTIRRVGTVLQLMHTLKYYYWVINPADSSGIAPKGLDGPRPSQKEIISLRAFMLLFLKQLILKDRGVKEDELQSILNYLLTMHEDENIHDVLQLLVALMSEHPASMIPAFDQRNGIRVIYKLLASKSESIWVQALKVLGYFLKHLGHKRKVEIMHTHSLFTLLGERLMLHTNTVTVTTYNTLYEILTEQVCTQVVHKPHPEPDSTVKIQNPMILKVVATLLKNSTPSAELMEVRRLFLSDMIKLFSNSRENRRCLLQCSVWQDWMFSLGYINPKSSEEQKITEMVYNIFRILLYHAIKYEWGGWRVWVDTLSIAHSKVTYEAHKEYLAKMYEEYQRQEEENIKKGKKGNVSTISGLSSQTAGAKGGMEIREIEDLSQSQSPESETDYPVSTDTRDLLMSTKVSDDILGSSDRPGSGVHVEVHDLLVDIKAEKVEATEVKLDDMDLSPETLVGGENGALVEVESLLDNVYSAAVEKLQNNVHGSVGIIKKNEEKDNGPLITLADEKEELPNSSTPFLFDKIPRQEEKLLPELSSNHIIPNIQDTQVHLGVSDDLGLLAHMTASVELTCTSSIMEEKDFRIHTTSDGVSSVSERELASSTKGLDYAEMTATTLETESSNSKAVPNVDAGSIISDTERSDDGKESGKEIRKIQTTATTQAVQGRSSTQQDRDLRVDLGFRGMPMTEEQRRQFSPGPRTTMFRIPEFKWSPMHQRLLTDLLFALETDVHVWRSHSTKSVMDFVNSNENIIFVHNTIHLISQMVDNIIIACGGILPLLSAATSPTGSKTELENIEVTQGMSAETAVTFLSRLMAMVDVLVFASSLNFSEIEAEKNMSSGGLMRQCLRLVCCVAVRNCLECRQRQRDRGSKSSHGSSKPQEAPHSVTAASASKTPLENVPGNLSPIKDPDRLLQDVDINRLRAVVFRDVDDSKQAQFLALAVVYFISVLMVSKYRDILEPQRETARTGSQPGRNIRQEINSPTSTVVVIPSIPHPSLNHGLLAKLMPEQSFAHSFYKETPATFPDTVKEKETPTPGEDIQLESSVPHTDSGMGEEQVASILDGAELEPAAGPDAMSELLSTLSSEVKKSQESLTEHPSEMLKPAPSISSISQTKGINVKEILKSLVAAPVEIAECGPEPIPYPDPALKREAHAILPMQFHSFDRSVVVPVKKPPPGSLAVTTVGATAAGSGLPTGSTSSIFAAPGATPKSMINTTGAVDSGSSSSSSSSSFVNGATSKNLPAVQTVAPMPEDSAENMSITAKLERALEKVAPLLREIFVDFAPFLSRTLLGSHGQELLIEGLVCMKSSTSVVELVMLLCSQEWQNSIQKNAGLAFIELINEGRLLCHAMKDHIVRVANEAEFILNRQRAEDVHKHAEFESQCAQYAADRREEEKMCDHLISAAKHRDHVTANQLKQKILNILTNKHGAWGAVSHSQLHDFWRLDYWEDDLRRRRRFVRNAFGSTHAEALLKSAVEYGTEEDVVKSKKAFRSQAIVNQNSETELMLEGDDDAVSLLQEKEIDNLAGPVVLSTPAQLIAPVVVAKGTLSITTTEIYFEVDEDDAAFKKIDTKVLAYTEGLHGKWMFSEIRAVFSRRYLLQNTALEVFMANRTSVMFNFPDQATVKKVVYSLPRVGVGTSYGLPQARRISLATPRQLYKSSNMTQRWQRREISNFEYLMFLNTIAGRTYNDLNQYPVFPWVLTNYESEELDLTLPGNFRDLSKPIGALNPKRAVFYAERYETWEEDQSPPFHYNTHYSTATSALSWLVRIEPFTTFFLNANDGKFDHPDRTFSSIARSWRTSQRDTSDVKELIPEFYYLPEMFVNSNGYHLGVREDEVVVNDVDLPPWAKKPEDFVRINRMALESEFVSCQLHQWIDLIFGYKQRGPEAVRALNVFHYLTYEGSVNLDSITDPVLREAMEAQIQNFGQTPSQLLIEPHPPRSSAMHLCFLPQSPLMFKDQMQQDVIMVLKFPSNSPVTHVAANTLPHLTIPAVVTVTCSRLFAVNRWHNTVGLRGAPGYSLDQAHHLPIEMDPLIANNSGVNKRQITDLVDQSIQINAHCFVVTADNRYILICGFWDKSFRVYSTETGKLTQIVFGHWDVVTCLARSESYIGGDCYIVSGSRDATLLLWYWSGRHHIIGDNPNSSDYPAPRAVLTGHDHEVVCVSVCAELGLVISGAKEGPCLVHTITGDLLRALEGPENCLFPRLISVSSEGHCIIYYERGRFSNFSINGKLLAQMEINDSTRAILLSSDGQNLVTGGDNGVVEVWQACDFKQLYIYPGCDAGIRAMDLSHDQRTLITGMASGSIVAFNIDFNRWHYEHQNRY.

Residues 961-985 are disordered; sequence ENIKKGKKGNVSTISGLSSQTAGAK. The segment covering 970–982 has biased composition (polar residues); it reads NVSTISGLSSQTA. Phosphoserine occurs at positions 1001 and 1004. 2 stretches are compositionally biased toward polar residues: residues 1203 to 1220 and 1231 to 1241; these read TSDG…SSTK and TLETESSNSKA. Disordered stretches follow at residues 1203 to 1222, 1231 to 1265, and 1270 to 1289; these read TSDG…TKGL, TLET…ESGK, and IQTT…QQDR. Residues 1253 to 1265 are compositionally biased toward basic and acidic residues; the sequence is DTERSDDGKESGK. Polar residues predominate over residues 1270 to 1286; that stretch reads IQTTATTQAVQGRSSTQ. A WD 1 repeat occupies 1316 to 1358; sequence TTMFRIPEFKWSPMHQRLLTDLLFALETDVHVWRSHSTKSVMD. 4 disordered regions span residues 1480–1521, 1639–1667, 1701–1721, and 1830–1850; these read QRDR…LSPI, PDTV…DSGM, VKKS…PAPS, and TGAV…VNGA. At S1519 the chain carries Phosphoserine. Positions 1701 to 1714 are enriched in basic and acidic residues; it reads VKKSQESLTEHPSE. Phosphoserine occurs at positions 1704 and 1707. The span at 1835-1845 shows a compositional bias: low complexity; the sequence is SGSSSSSSSSS. Phosphoserine is present on S2128. The region spanning 2137 to 2245 is the BEACH-type PH domain; sequence NLAGPVVLST…TVKKVVYSLP (109 aa). Residues 2264 to 2553 form the BEACH domain; the sequence is ATPRQLYKSS…QLLIEPHPPR (290 aa). Position 2565 is a phosphoserine (S2565). WD repeat units follow at residues 2708–2751, 2768–2808, 2850–2889, and 2892–2931; these read GHWD…HIIG, GHDH…RALE, EIND…QLYI, and GCDA…WHYE.

The protein belongs to the WD repeat neurobeachin family. Interacts with RII subunit of PKA. In terms of tissue distribution, forebrain, brainstem and cerebellum.

The protein resides in the membrane. It is found in the endomembrane system. The protein localises to the postsynaptic cell membrane. Functionally, binds to type II regulatory subunits of protein kinase A and anchors/targets them to the membrane. May anchor the kinase to cytoskeletal and/or organelle-associated proteins. May have a role in membrane trafficking. The polypeptide is Neurobeachin (Nbea) (Mus musculus (Mouse)).